Consider the following 448-residue polypeptide: Immunoglobulin G-binding protein G (448 aa).

Residues 1–33 form the signal peptide; that stretch reads MEKEKKVKYFLRKSAFGLASVSAAFLVGSTVFA. Repeat copies occupy residues 104-140, 179-215, 228-282, and 298-352. The tract at residues 104–215 is 2 X 37 AA repeats; that stretch reads LAKAKADALK…AKTVEGVKEL (112 aa). Residues 228-352 form a 2 X 55 AA repeats region; sequence TYKLILNGKT…DATKTFTVTE (125 aa). Residues 358 to 422 form a disordered region; it reads PGDAPTEPEK…TLPTTGEGSN (65 aa). The segment covering 384-412 has biased composition (basic and acidic residues); the sequence is AKDDAKKDDTKKEDAKKPEAKKDDAKKAE. The 5 X 5 AA repeats of [DE]-D-A-K-K stretch occupies residues 386 to 410; that stretch reads DDAKKDDTKKEDAKKPEAKKDDAKK. An LPXTG sorting signal motif is present at residues 414 to 418; the sequence is LPTTG. Threonine 417 carries the pentaglycyl murein peptidoglycan amidated threonine modification. The propeptide at 418–448 is removed by sortase; it reads GEGSNPFFTAAALAVMAGAGALAVASKRKED.

The protein localises to the secreted. The protein resides in the cell wall. In terms of biological role, binds to the constant Fc region of IgG with high affinity. The sequence is that of Immunoglobulin G-binding protein G (spg) from Streptococcus sp. group G.